Here is a 154-residue protein sequence, read N- to C-terminus: Fimbrial protein (154 aa).

A propeptide spans 1-6 (leader sequence); it reads MKAQKG. Phe7 is subject to N-methylphenylalanine. The helical transmembrane segment at 7 to 27 threads the bilayer; the sequence is FTLIELMIVVAIIGILAAIAI. A disulfide bridge connects residues Cys133 and Cys151. Ser154 carries O-linked (FucNAc...) serine glycosylation.

It belongs to the N-Me-Phe pilin family. As to quaternary structure, the pili are polar flexible filaments of about 5.4 nanometers diameter and 2.5 micrometers average length; they consist of only a single polypeptide chain arranged in a helical configuration of five subunits per turn in the assembled pilus. In terms of processing, O-glycosylated; glycan consists of 5NbetaOHC47NFmPse(alpha2-4)Xyl(beta1-3)FucNAc in beta1-O linkage to Ser.

The protein resides in the fimbrium. Its subcellular location is the membrane. The chain is Fimbrial protein (pilA) from Pseudomonas aeruginosa.